Consider the following 1437-residue polypeptide: MGARASVLSGGELDKWEKIRLRPGGKKKYKLKHIVWASRELERFAVNPGLLETSEGCRQILGQLQPSLQTGSEELRSLYNTVATLYCVHQRIDVKDTKEALEKIEEEQNKSKKKAQQAAAAAGTGNSSQVSQNYPIVQNLQGQMVHQAISPRTLNAWVKVVEEKAFSPEVIPMFSALSEGATPQDLNTMLNTVGGHQAAMQMLKETINEEAAEWDRVHPVHAGPIAPGQMREPRGSDIAGTTSTLQEQIGWMTNNPPIPVGEIYKRWIILGLNKIVRMYSPTSILDIRQGPKEPFRDYVDRFYKTLRAEQASQDVKNWMTETLLVQNANPDCKTILKALGPAATLEEMMTACQGVGGPGHKARVLAEAMSQVTNPANIMMQRGNFRNQRKTVKCFNCGKEGHIAKNCRAPRKKGCWRCGREGHQMKDCTERQANFLREDLAFLQGKAREFSSEQTRANSPTRRELQVWGGENNSLSEAGADRQGTVSFNFPQITLWQRPLVTIRIGGQLKEALLDTGADDTVLEEMNLPGKWKPKMIGGIGGFIKVRQYDQIPVEICGHKAIGTVLVGPTPVNIIGRNLLTQIGCTLNFPISPIETVPVKLKPGMDGPKVKQWPLTEEKIKALVEICTEMEKEGKISKIGPENPYNTPVFAIKKKDSTKWRKLVDFRELNKRTQDFWEVQLGIPHPAGLKKKKSVTVLDVGDAYFSVPLDKDFRKYTAFTIPSINNETPGIRYQYNVLPQGWKGSPAIFQSSMTKILEPFRKQNPDIVIYQYMDDLYVGSDLEIGQHRTKIEELRQHLLRWGFTTPDKKHQKEPPFLWMGYELHPDKWTVQPIMLPEKDSWTVNDIQKLVGKLNWASQIYAGIKVKQLCKLLRGTKALTEVIPLTEEAELELAENREILKEPVHEVYYDPSKDLVAEIQKQGQGQWTYQIYQEPFKNLKTGKYARMRGAHTNDVKQLTEAVQKVSTESIVIWGKIPKFKLPIQKETWEAWWMEYWQATWIPEWEFVNTPPLVKLWYQLEKEPIVGAETFYVDGAANRETKLGKAGYVTDRGRQKVVSIADTTNQKTELQAIHLALQDSGLEVNIVTDSQYALGIIQAQPDKSESELVSQIIEQLIKKEKVYLAWVPAHKGIGGNEQVDKLVSAGIRKVLFLNGIDKAQEEHEKYHSNWRAMASDFNLPPVVAKEIVASCDKCQLKGEAMHGQVDCSPGIWQLDCTHLEGKIILVAVHVASGYIEAEVIPAETGQETAYFLLKLAGRWPVKTIHTDNGSNFTSTTVKAACWWAGIKQEFGIPYNPQSQGVVESMNNELKKIIGQVRDQAEHLKTAVQMAVFIHNFKRKGGIGGYSAGERIVDIIATDIQTKELQKQITKIQNFRVYYRDNKDPLWKGPAKLLWKGEGAVVIQDNSDIKVVPRRKAKIIRDYGKQMAGDDCVASRQDED.

Gly-2 carries N-myristoyl glycine; by host lipidation. An interaction with Gp41 region spans residues 7 to 31 (VLSGGELDKWEKIRLRPGGKKKYKL). The segment at 8 to 43 (LSGGELDKWEKIRLRPGGKKKYKLKHIVWASRELER) is interaction with host CALM1. Residues 12–19 (ELDKWEKI) are interaction with host AP3D1. The interaction with membrane phosphatidylinositol 4,5-bisphosphate and RNA stretch occupies residues 14–33 (DKWEKIRLRPGGKKKYKLKH). Positions 16–22 (WEKIRLR) match the Nuclear export signal motif. Positions 26 to 32 (KKKYKLK) match the Nuclear localization signal motif. The interval 73–77 (EELRS) is interaction with membrane phosphatidylinositol 4,5-bisphosphate. Residues 106-129 (EEQNKSKKKAQQAAAAAGTGNSSQ) form a disordered region. At Tyr-134 the chain carries Phosphotyrosine; by host. Positions 191–229 (NTVGGHQAAMQMLKETINEEAAEWDRVHPVHAGPIAPGQ) are interaction with human PPIA/CYPA and NUP153. A dimerization/Multimerization of capsid protein p24 region spans residues 279–365 (YSPTSILDIR…GGPGHKARVL (87 aa)). 2 CCHC-type zinc fingers span residues 392-409 (VKCF…NCRA) and 413-430 (KGCW…DCTE). The dimerization of protease stretch occupies residues 491–495 (PQITL). The region spanning 510–579 (KEALLDTGAD…TPVNIIGRNL (70 aa)) is the Peptidase A2 domain. The active-site For protease activity; shared with dimeric partner is the Asp-515. Dimerization of protease regions lie at residues 539-545 (GIGGFIK) and 578-590 (NLLT…LNFP). Positions 633–823 (EGKISKIGPE…PPFLWMGYEL (191 aa)) constitute a Reverse transcriptase domain. Mg(2+) is bound by residues Asp-699, Asp-774, and Asp-775. An RT 'primer grip' region spans residues 816-824 (FLWMGYELH). Positions 987 to 1003 (WEAWWMEYWQATWIPEW) match the Tryptophan repeat motif motif. An RNase H type-1 domain is found at 1023–1146 (IVGAETFYVD…VDKLVSAGIR (124 aa)). Residues Asp-1032, Glu-1067, Asp-1087, and Asp-1138 each contribute to the Mg(2+) site. The Integrase-type zinc-finger motif lies at 1152–1193 (NGIDKAQEEHEKYHSNWRAMASDFNLPPVVAKEIVASCDKCQ). Zn(2+) contacts are provided by His-1161, His-1165, Cys-1189, and Cys-1192. An Integrase catalytic domain is found at 1203 to 1353 (VDCSPGIWQL…SAGERIVDII (151 aa)). Residues Asp-1213, Asp-1265, and Glu-1301 each contribute to the Mg(2+) site. A DNA-binding region (integrase-type) is located at residues 1372-1419 (FRVYYRDNKDPLWKGPAKLLWKGEGAVVIQDNSDIKVVPRRKAKIIRD).

In terms of assembly, homotrimer; further assembles as hexamers of trimers. Interacts with gp41 (via C-terminus). Interacts with host CALM1; this interaction induces a conformational change in the Matrix protein, triggering exposure of the myristate group. Interacts with host AP3D1; this interaction allows the polyprotein trafficking to multivesicular bodies during virus assembly. Part of the pre-integration complex (PIC) which is composed of viral genome, matrix protein, Vpr and integrase. Homodimer; the homodimer further multimerizes as homohexamers or homopentamers. Interacts with human PPIA/CYPA; This interaction stabilizes the capsid. Interacts with human NUP153. Interacts with host PDZD8; this interaction stabilizes the capsid. Interacts with monkey TRIM5; this interaction destabilizes the capsid. As to quaternary structure, homodimer, whose active site consists of two apposed aspartic acid residues. In terms of assembly, heterodimer of p66 RT and p51 RT (RT p66/p51). Heterodimerization of RT is essential for DNA polymerase activity. The overall folding of the subdomains is similar in p66 RT and p51 RT but the spatial arrangements of the subdomains are dramatically different. Homotetramer; may further associate as a homohexadecamer. Part of the pre-integration complex (PIC) which is composed of viral genome, matrix protein, Vpr and integrase. Interacts with human SMARCB1/INI1 and human PSIP1/LEDGF isoform 1. Interacts with human KPNA3; this interaction might play a role in nuclear import of the pre-integration complex. Interacts with human NUP153; this interaction might play a role in nuclear import of the pre-integration complex. It depends on Mg(2+) as a cofactor. Post-translationally, specific enzymatic cleavages by the viral protease yield mature proteins. The protease is released by autocatalytic cleavage. The polyprotein is cleaved during and after budding, this process is termed maturation. Proteolytic cleavage of p66 RT removes the RNase H domain to yield the p51 RT subunit. Nucleocapsid protein p7 might be further cleaved after virus entry. Tyrosine phosphorylated presumably in the virion by a host kinase. Phosphorylation is apparently not a major regulator of membrane association. In terms of processing, phosphorylated possibly by host MAPK1; this phosphorylation is necessary for Pin1-mediated virion uncoating. Post-translationally, methylated by host PRMT6, impairing its function by reducing RNA annealing and the initiation of reverse transcription.

It localises to the host cell membrane. The protein resides in the host endosome. Its subcellular location is the host multivesicular body. The protein localises to the virion membrane. It is found in the host nucleus. It localises to the host cytoplasm. The protein resides in the virion. It carries out the reaction Specific for a P1 residue that is hydrophobic, and P1' variable, but often Pro.. It catalyses the reaction Endohydrolysis of RNA in RNA/DNA hybrids. Three different cleavage modes: 1. sequence-specific internal cleavage of RNA. Human immunodeficiency virus type 1 and Moloney murine leukemia virus enzymes prefer to cleave the RNA strand one nucleotide away from the RNA-DNA junction. 2. RNA 5'-end directed cleavage 13-19 nucleotides from the RNA end. 3. DNA 3'-end directed cleavage 15-20 nucleotides away from the primer terminus.. The enzyme catalyses 3'-end directed exonucleolytic cleavage of viral RNA-DNA hybrid.. The catalysed reaction is DNA(n) + a 2'-deoxyribonucleoside 5'-triphosphate = DNA(n+1) + diphosphate. With respect to regulation, protease: The viral protease is inhibited by many synthetic protease inhibitors (PIs), such as amprenavir, atazanavir, indinavir, loprinavir, nelfinavir, ritonavir and saquinavir. Use of protease inhibitors in tritherapy regimens permit more ambitious therapeutic strategies. Reverse transcriptase/ribonuclease H: RT can be inhibited either by nucleoside RT inhibitors (NRTIs) or by non nucleoside RT inhibitors (NNRTIs). NRTIs act as chain terminators, whereas NNRTIs inhibit DNA polymerization by binding a small hydrophobic pocket near the RT active site and inducing an allosteric change in this region. Classical NRTIs are abacavir, adefovir (PMEA), didanosine (ddI), lamivudine (3TC), stavudine (d4T), tenofovir (PMPA), zalcitabine (ddC), and zidovudine (AZT). Classical NNRTIs are atevirdine (BHAP U-87201E), delavirdine, efavirenz (DMP-266), emivirine (I-EBU), and nevirapine (BI-RG-587). The tritherapies used as a basic effective treatment of AIDS associate two NRTIs and one NNRTI. Its function is as follows. Mediates, with Gag polyprotein, the essential events in virion assembly, including binding the plasma membrane, making the protein-protein interactions necessary to create spherical particles, recruiting the viral Env proteins, and packaging the genomic RNA via direct interactions with the RNA packaging sequence (Psi). Gag-Pol polyprotein may regulate its own translation, by the binding genomic RNA in the 5'-UTR. At low concentration, the polyprotein would promote translation, whereas at high concentration, the polyprotein would encapsidate genomic RNA and then shut off translation. Targets the polyprotein to the plasma membrane via a multipartite membrane-binding signal, that includes its myristoylated N-terminus. Matrix protein is part of the pre-integration complex. Implicated in the release from host cell mediated by Vpu. Binds to RNA. Functionally, forms the conical core that encapsulates the genomic RNA-nucleocapsid complex in the virion. Most core are conical, with only 7% tubular. The core is constituted by capsid protein hexamer subunits. The core is disassembled soon after virion entry. Host restriction factors such as TRIM5-alpha or TRIMCyp bind retroviral capsids and cause premature capsid disassembly, leading to blocks in reverse transcription. Capsid restriction by TRIM5 is one of the factors which restricts HIV-1 to the human species. Host PIN1 apparently facilitates the virion uncoating. On the other hand, interactions with PDZD8 or CYPA stabilize the capsid. In terms of biological role, encapsulates and protects viral dimeric unspliced genomic RNA (gRNA). Binds these RNAs through its zinc fingers. Acts as a nucleic acid chaperone which is involved in rearangement of nucleic acid secondary structure during gRNA retrotranscription. Also facilitates template switch leading to recombination. As part of the polyprotein, participates in gRNA dimerization, packaging, tRNA incorporation and virion assembly. Its function is as follows. Aspartyl protease that mediates proteolytic cleavages of Gag and Gag-Pol polyproteins during or shortly after the release of the virion from the plasma membrane. Cleavages take place as an ordered, step-wise cascade to yield mature proteins. This process is called maturation. Displays maximal activity during the budding process just prior to particle release from the cell. Also cleaves Nef and Vif, probably concomitantly with viral structural proteins on maturation of virus particles. Hydrolyzes host EIF4GI and PABP1 in order to shut off the capped cellular mRNA translation. The resulting inhibition of cellular protein synthesis serves to ensure maximal viral gene expression and to evade host immune response. Also mediates cleavage of host YTHDF3. Mediates cleavage of host CARD8, thereby activating the CARD8 inflammasome, leading to the clearance of latent HIV-1 in patient CD4(+) T-cells after viral reactivation; in contrast, HIV-1 can evade CARD8-sensing when its protease remains inactive in infected cells prior to viral budding. Multifunctional enzyme that converts the viral RNA genome into dsDNA in the cytoplasm, shortly after virus entry into the cell. This enzyme displays a DNA polymerase activity that can copy either DNA or RNA templates, and a ribonuclease H (RNase H) activity that cleaves the RNA strand of RNA-DNA heteroduplexes in a partially processive 3' to 5' endonucleasic mode. Conversion of viral genomic RNA into dsDNA requires many steps. A tRNA(3)-Lys binds to the primer-binding site (PBS) situated at the 5'-end of the viral RNA. RT uses the 3' end of the tRNA primer to perform a short round of RNA-dependent minus-strand DNA synthesis. The reading proceeds through the U5 region and ends after the repeated (R) region which is present at both ends of viral RNA. The portion of the RNA-DNA heteroduplex is digested by the RNase H, resulting in a ssDNA product attached to the tRNA primer. This ssDNA/tRNA hybridizes with the identical R region situated at the 3' end of viral RNA. This template exchange, known as minus-strand DNA strong stop transfer, can be either intra- or intermolecular. RT uses the 3' end of this newly synthesized short ssDNA to perform the RNA-dependent minus-strand DNA synthesis of the whole template. RNase H digests the RNA template except for two polypurine tracts (PPTs) situated at the 5'-end and near the center of the genome. It is not clear if both polymerase and RNase H activities are simultaneous. RNase H probably can proceed both in a polymerase-dependent (RNA cut into small fragments by the same RT performing DNA synthesis) and a polymerase-independent mode (cleavage of remaining RNA fragments by free RTs). Secondly, RT performs DNA-directed plus-strand DNA synthesis using the PPTs that have not been removed by RNase H as primers. PPTs and tRNA primers are then removed by RNase H. The 3' and 5' ssDNA PBS regions hybridize to form a circular dsDNA intermediate. Strand displacement synthesis by RT to the PBS and PPT ends produces a blunt ended, linear dsDNA copy of the viral genome that includes long terminal repeats (LTRs) at both ends. Functionally, catalyzes viral DNA integration into the host chromosome, by performing a series of DNA cutting and joining reactions. This enzyme activity takes place after virion entry into a cell and reverse transcription of the RNA genome in dsDNA. The first step in the integration process is 3' processing. This step requires a complex comprising the viral genome, matrix protein, Vpr and integrase. This complex is called the pre-integration complex (PIC). The integrase protein removes 2 nucleotides from each 3' end of the viral DNA, leaving recessed CA OH's at the 3' ends. In the second step, the PIC enters cell nucleus. This process is mediated through integrase and Vpr proteins, and allows the virus to infect a non dividing cell. This ability to enter the nucleus is specific of lentiviruses, other retroviruses cannot and rely on cell division to access cell chromosomes. In the third step, termed strand transfer, the integrase protein joins the previously processed 3' ends to the 5' ends of strands of target cellular DNA at the site of integration. The 5'-ends are produced by integrase-catalyzed staggered cuts, 5 bp apart. A Y-shaped, gapped, recombination intermediate results, with the 5'-ends of the viral DNA strands and the 3' ends of target DNA strands remaining unjoined, flanking a gap of 5 bp. The last step is viral DNA integration into host chromosome. This involves host DNA repair synthesis in which the 5 bp gaps between the unjoined strands are filled in and then ligated. Since this process occurs at both cuts flanking the HIV genome, a 5 bp duplication of host DNA is produced at the ends of HIV-1 integration. Alternatively, Integrase may catalyze the excision of viral DNA just after strand transfer, this is termed disintegration. This is Gag-Pol polyprotein (gag-pol) from Human immunodeficiency virus type 1 group M subtype B (isolate ARV2/SF2) (HIV-1).